The primary structure comprises 632 residues: MKGINGAKRVRHDASPSAQDGYVTPEKRVKRWSGGQTAANYREWDVEEVCLFLASHGLGELEVIFRENKIKGRILEYLTDSHLKDLQISSVALRLDLLSCLRMLCQNSPSIMKVFNDPIHGHIELHPLLVRIIDTPEFQRLRYIKQLGGSYYVFPGASHNRFEHSIGVGYLAGCLVQALHERQPDLQIDMRDMLCVQIAGLCHDLGHGPFSHMFDGRFMPLACPQKKFKHESASVAMFDHLIQSNGLEEAMKENGLCLPDDLTFIKEQIAGPLSSEAEQQFNSSPNSSSWPYRGRTEEKSFLYEIVANKRNGIDVDKWDYFARDCHHLGIQNNFDYKRFLKFARVCEVGSKKHICTRDKEVGNLYDMFHTRNCLHRRAYQHKVGNIIETMITDAFVKADPHIKIEGANGKYYSISGSVDDMVAYTKLTDNIYHQILYSNDPNLKEAREILQKVERRHLYKYIGQTHPHSNSRIEPDKYDKLPADLASSVPQTSAKDVELHAEDFIVDVIHMDYGMKEQNPINNVRFYCKADPRKAIKIRRDQVSQLLPEKFAEQIIRVYCKKTDEKSLETAKRYFIQWCMNKDFSKPQDGDVVAPDMTPLKASWVDDDDDEDNEGKQQTELLHKSRVKLFTN.

The interval 1-22 (MKGINGAKRVRHDASPSAQDGY) is disordered. In terms of domain architecture, SAM spans 44–107 (WDVEEVCLFL…LSCLRMLCQN (64 aa)). K113 and V114 together coordinate GTP. Position 116 (N116) interacts with dGTP. 3 residues coordinate GTP: D134, Q139, and R142. Residues Q146, L147, V153, and R161 each contribute to the dGTP site. Q146 lines the dATP pocket. A dCTP-binding site is contributed by Q146. Q146 is a binding site for dTTP. Residue R161 participates in dATP binding. Position 161 (R161) interacts with dCTP. R161 contributes to the dTTP binding site. The HD domain maps to 161 to 321 (RFEHSIGVGY…GIDVDKWDYF (161 aa)). H164, H203, and D204 together coordinate Mn(2+). Residues H207 and H212 each coordinate dATP. Residues H207 and H212 each coordinate dCTP. DTTP contacts are provided by H207 and H212. H230 is an active-site residue. D316 provides a ligand contact to Mn(2+). Positions 317, 320, 324, 338, 357, 359, 363, 371, 379, 380, 381, and 382 each coordinate dGTP. DATP-binding residues include K317, Y320, and D324. Residues K317, Y320, and D324 each coordinate dCTP. The dTTP site is built by K317, Y320, and D324. DATP is bound at residue R371. R371 is a binding site for dCTP. Position 380 (Q380) interacts with dATP. Q380 serves as a coordination point for dCTP. Q380 is a binding site for dTTP. Residues R456, K460, and K529 each coordinate GTP. K529 lines the dGTP pocket.

This sequence belongs to the SAMHD1 family. In terms of assembly, homodimer; in absence of GTP and dNTP. Homotetramer; in GTP- and dNTP-bound form. Interacts with rbbp8/CtIP. Zn(2+) serves as cofactor.

It localises to the nucleus. The protein resides in the chromosome. The enzyme catalyses a 2'-deoxyribonucleoside 5'-triphosphate + H2O = a 2'-deoxyribonucleoside + triphosphate + H(+). It carries out the reaction dATP + H2O = 2'-deoxyadenosine + triphosphate + H(+). It catalyses the reaction dCTP + H2O = 2'-deoxycytidine + triphosphate + H(+). The catalysed reaction is dGTP + H2O = 2'-deoxyguanosine + triphosphate + H(+). The enzyme catalyses dTTP + H2O = thymidine + triphosphate + H(+). Its activity is regulated as follows. Allosterically activated and regulated via the combined actions of GTP and dNTPs (dATP, dGTP, dTTP and dCTP): Allosteric site 1 binds GTP, while allosteric site 2 binds dNTP. Allosteric activation promotes the formation of highly active homotetramers. Its function is as follows. Protein that acts both as a host restriction factor involved in defense response to virus and as a regulator of DNA end resection at stalled replication forks. Has deoxynucleoside triphosphate (dNTPase) activity, which is required to restrict infection by viruses: dNTPase activity reduces cellular dNTP levels to levels too low for retroviral reverse transcription to occur, blocking early-stage virus replication in dendritic and other myeloid cells. Functions during S phase at stalled DNA replication forks to promote the resection of gapped or reversed forks: acts by stimulating the exonuclease activity of mre11, activating the ATR-CHK1 pathway and allowing the forks to restart replication. Ability to promote DNA end resection at stalled replication forks is independent of dNTPase activity. The sequence is that of Deoxynucleoside triphosphate triphosphohydrolase SAMHD1 from Xenopus laevis (African clawed frog).